Consider the following 307-residue polypeptide: Ribosomal RNA small subunit methyltransferase H (307 aa).

Residues 32–34 (GGH), Asp-52, Phe-78, Asp-99, and Gln-106 each bind S-adenosyl-L-methionine.

This sequence belongs to the methyltransferase superfamily. RsmH family.

Its subcellular location is the cytoplasm. It catalyses the reaction cytidine(1402) in 16S rRNA + S-adenosyl-L-methionine = N(4)-methylcytidine(1402) in 16S rRNA + S-adenosyl-L-homocysteine + H(+). Functionally, specifically methylates the N4 position of cytidine in position 1402 (C1402) of 16S rRNA. In Acinetobacter baumannii (strain AB0057), this protein is Ribosomal RNA small subunit methyltransferase H.